The sequence spans 696 residues: UV radiation resistance-associated gene protein (696 aa).

Ser214 and Ser218 each carry phosphoserine. 2 coiled-coil regions span residues Leu251–Leu278 and Asn330–Leu394. The residue at position 666 (Ser666) is a Phosphoserine. A disordered region spans residues Ser666–Ser696. Tyr667 is subject to Phosphotyrosine. Phosphoserine occurs at positions 668 and 685. Residues Asn681–Ser696 are compositionally biased toward polar residues.

Its function is as follows. Involved in biosynthetic vesicle transport to lysosomes. Acts as a cell growth regulator. Also has a crucial role in controlling organ rotation by regulating membrane-localized Notch receptor endocytosis and subsequent degradation. Regulation of organ rotation is not by induction of autophagy. The polypeptide is UV radiation resistance-associated gene protein (Uvrag) (Drosophila melanogaster (Fruit fly)).